The following is a 222-amino-acid chain: MDLLFGRRKTPEELLRQNQRALNRAMRELDRERQKLETQEKKIIADIKKMAKQGQMDAVRIMAKDLVRTRRYVRKFVLMRANIQAVSLKIQTLKSNNSMAQAMKGVTKAMGTMNRQLKLPQIQKIMMEFERQAEIMDMKEEMMNDAIDDAMGDEEDEEESDAVVSQVLDELGLSLTDELSNLPSTGGSLSVAAGGKKAEATASALADADADLEERLKNLRRD.

The residue at position 1 (Met1) is an N-acetylmethionine. The stretch at 12 to 53 forms a coiled coil; that stretch reads EELLRQNQRALNRAMRELDRERQKLETQEKKIIADIKKMAKQ. The interaction with VPS4B stretch occupies residues 56–222; sequence MDAVRIMAKD…EERLKNLRRD (167 aa). Residues 179–188 are compositionally biased toward polar residues; sequence LSNLPSTGGS. The disordered stretch occupies residues 179–198; sequence LSNLPSTGGSLSVAAGGKKA. Phosphoserine is present on Ser184. Residue Thr185 is modified to Phosphothreonine. Residues Ser188, Ser190, and Ser203 each carry the phosphoserine modification. The stretch at 195–222 forms a coiled coil; sequence GKKAEATASALADADADLEERLKNLRRD. Residues 210-220 carry the MIT-interacting motif motif; the sequence is ADLEERLKNLR. The interaction with VTA1 stretch occupies residues 217–222; sequence KNLRRD.

The protein belongs to the SNF7 family. In terms of assembly, probable core component of the endosomal sorting required for transport complex III (ESCRT-III). ESCRT-III components are thought to multimerize to form a flat lattice on the perimeter membrane of the endosome. Several assembly forms of ESCRT-III may exist that interact and act sequentially. In vitro, heteromerizes with CHMP3 (but not CHMP4) to form helical tubular structures that expose membrane-interacting sites on the outside whereas VPS4B can associate on the inside of the tubule. Interacts with CHMP1B, CHMP2B, CHMP3, CHMP4A, CHMP4B, CHMP4C and CHMP5. Interacts with VPS4A; the interaction is direct. Interacts with VPS4B; the interaction is direct. Interacts with MITD1. Interacts with VTA1; the interaction probably involves the open conformation of CHMP2A. Post-translationally, ISGylated in a CHMP5-dependent manner. Isgylation weakens and inhibits its interactions with VPS4A and VTA1 respectively. As to expression, widely expressed. Highly expressed in brain, heart, liver and kidney.

Its subcellular location is the late endosome membrane. It is found in the cytoplasm. The protein localises to the nucleus envelope. Functionally, probable core component of the endosomal sorting required for transport complex III (ESCRT-III) which is involved in multivesicular bodies (MVBs) formation and sorting of endosomal cargo proteins into MVBs. MVBs contain intraluminal vesicles (ILVs) that are generated by invagination and scission from the limiting membrane of the endosome and mostly are delivered to lysosomes enabling degradation of membrane proteins, such as stimulated growth factor receptors, lysosomal enzymes and lipids. The MVB pathway appears to require the sequential function of ESCRT-O, -I,-II and -III complexes. ESCRT-III proteins mostly dissociate from the invaginating membrane before the ILV is released. The ESCRT machinery also functions in topologically equivalent membrane fission events, such as the terminal stages of cytokinesis. Together with SPAST, the ESCRT-III complex promotes nuclear envelope sealing and mitotic spindle disassembly during late anaphase. Recruited to the reforming nuclear envelope (NE) during anaphase by LEMD2. ESCRT-III proteins are believed to mediate the necessary vesicle extrusion and/or membrane fission activities, possibly in conjunction with the AAA ATPase VPS4. This Mus musculus (Mouse) protein is Charged multivesicular body protein 2a (Chmp2a).